The primary structure comprises 138 residues: Acidic phospholipase A2 Tpu-E6a (138 aa).

Residues 1 to 16 form the signal peptide; the sequence is MRTLWIMAVLLLGVKG. Intrachain disulfides connect cysteine 42-cysteine 131, cysteine 44-cysteine 60, cysteine 59-cysteine 111, cysteine 65-cysteine 138, cysteine 66-cysteine 104, cysteine 73-cysteine 97, and cysteine 91-cysteine 102. 3 residues coordinate Ca(2+): tyrosine 43, glycine 45, and glycine 47. Histidine 63 is a catalytic residue. Aspartate 64 serves as a coordination point for Ca(2+). Aspartate 105 is an active-site residue.

As to quaternary structure, monomer. Ca(2+) serves as cofactor. As to expression, expressed by the venom gland.

It localises to the secreted. The catalysed reaction is a 1,2-diacyl-sn-glycero-3-phosphocholine + H2O = a 1-acyl-sn-glycero-3-phosphocholine + a fatty acid + H(+). Functionally, snake venom phospholipase A2 (PLA2) that impairs hemostasis. It weakly inhibits ADP-induced platelet aggregation when tested on platelet rich plasma from human and rabbit blood (15-25% of inhibition at 5-10 ug of enzyme), and dose-dependently inhibits blood coagulation, possibly by inhibiting thrombin activation. Exhibits high hydrolytic activities toward L-dipalmitoyl phosphatidylcholine. PLA2 catalyzes the calcium-dependent hydrolysis of the 2-acyl groups in 3-sn-phosphoglycerides. This Craspedocephalus puniceus (Flat-nosed pitviper) protein is Acidic phospholipase A2 Tpu-E6a.